The following is a 165-amino-acid chain: Pyruvoyl-dependent arginine decarboxylase 1 (165 aa).

S45 carries the pyruvic acid (Ser) modification.

It belongs to the PdaD family. Pyruvate is required as a cofactor.

It carries out the reaction L-arginine + H(+) = agmatine + CO2. The polypeptide is Pyruvoyl-dependent arginine decarboxylase 1 (pdaD1) (Methanosarcina acetivorans (strain ATCC 35395 / DSM 2834 / JCM 12185 / C2A)).